The following is a 238-amino-acid chain: Large ribosomal subunit protein uL1 (238 aa).

The protein belongs to the universal ribosomal protein uL1 family. Part of the 50S ribosomal subunit.

In terms of biological role, binds directly to 23S rRNA. The L1 stalk is quite mobile in the ribosome, and is involved in E site tRNA release. Protein L1 is also a translational repressor protein, it controls the translation of the L11 operon by binding to its mRNA. The protein is Large ribosomal subunit protein uL1 of Rickettsia prowazekii (strain Madrid E).